The sequence spans 651 residues: Acetyl-coenzyme A synthetase 1 (651 aa).

Residues 191–194 (RGGK), Thr311, and Asn335 each bind CoA. ATP-binding positions include 387-389 (GEP), 411-416 (DTWWQT), Asp500, and Arg515. Residue Ser523 coordinates CoA. Residue Arg526 coordinates ATP. Residues Val537, His539, and Val542 each coordinate Mg(2+). Arg584 is a binding site for CoA. Lys609 is modified (N6-acetyllysine).

Belongs to the ATP-dependent AMP-binding enzyme family. The cofactor is Mg(2+). In terms of processing, acetylated. Deacetylation by the SIR2-homolog deacetylase activates the enzyme.

The enzyme catalyses acetate + ATP + CoA = acetyl-CoA + AMP + diphosphate. Its function is as follows. Catalyzes the conversion of acetate into acetyl-CoA (AcCoA), an essential intermediate at the junction of anabolic and catabolic pathways. AcsA undergoes a two-step reaction. In the first half reaction, AcsA combines acetate with ATP to form acetyl-adenylate (AcAMP) intermediate. In the second half reaction, it can then transfer the acetyl group from AcAMP to the sulfhydryl group of CoA, forming the product AcCoA. In Pseudomonas aeruginosa (strain ATCC 15692 / DSM 22644 / CIP 104116 / JCM 14847 / LMG 12228 / 1C / PRS 101 / PAO1), this protein is Acetyl-coenzyme A synthetase 1.